The following is a 645-amino-acid chain: Protein FAM47B (645 aa).

Basic and acidic residues-rich tracts occupy residues 1 to 11, 238 to 251, and 288 to 299; these read MGDRRPQDRPR, EPPETRASHLRVDP, and PETRVSHLHPEP. 2 disordered regions span residues 1-23 and 168-321; these read MGDRRPQDRPRSQGMDSKPWYCD and AREK…SLCP.

The protein belongs to the FAM47 family.

The sequence is that of Protein FAM47B (FAM47B) from Homo sapiens (Human).